Here is an 860-residue protein sequence, read N- to C-terminus: Probable linoleate 9S-lipoxygenase 4 (860 aa).

The PLAT domain maps to 29–159; the sequence is NALDFTDLAG…RYKSDRIFFA (131 aa). One can recognise a Lipoxygenase domain in the interval 162–860; sequence PYLPSETPEL…GKGIPNSVSI (699 aa). The segment at 209 to 246 is disordered; it reads PDQGKENVRTTLGGSADYPYPRRGRTGRPPTRTDPKSE. Fe cation contacts are provided by His-521, His-526, His-712, Asn-716, and Ile-860.

This sequence belongs to the lipoxygenase family. Monomer. Fe cation is required as a cofactor. In terms of tissue distribution, expressed in tubers and roots. Not detected in leaves, flowers, stems, shoot tips, or axillary buds.

It localises to the cytoplasm. It carries out the reaction (9Z,12Z)-octadecadienoate + O2 = (9S)-hydroperoxy-(10E,12Z)-octadecadienoate. It functions in the pathway lipid metabolism; oxylipin biosynthesis. Functionally, plant lipoxygenases may be involved in a number of diverse aspects of plant physiology including growth and development, pest resistance, and senescence or responses to wounding. Catalyzes the hydroperoxidation of lipids containing a cis,cis-1,4-pentadiene structure. The chain is Probable linoleate 9S-lipoxygenase 4 (LOX1.4) from Solanum tuberosum (Potato).